The primary structure comprises 259 residues: Probable transcriptional regulatory protein Noca_2383 (259 aa).

The protein belongs to the TACO1 family.

The protein localises to the cytoplasm. The polypeptide is Probable transcriptional regulatory protein Noca_2383 (Nocardioides sp. (strain ATCC BAA-499 / JS614)).